The following is a 1178-amino-acid chain: MDSNPCQDVSGDTSSTPMANNNPTNDSTISSQNHSKIGLRKHQQQHYHQHSHSQMHSHSQQSPYINQLEYFTNNQFSRSFNSLILEDANDANTNNSSTTTLNKKTINKSPPFNIKQDLLNDSIDTFLDNSNTETIEDGDVTTTDDDHDFDDEDIEDPEAVQYTPTLNILKSKKVDSFDIISSKHRKSNSQITYNSHVRKPSEEDTSSSMATIRLSNNSQSSIKRSSKYLNLSIDSNLKTVDGGKIPDEIDDISLNEIDVAVAPNDFSSPLSARKPDIFAAITAANGNSNNQFKRPHKLVSQSPSPSSKNKFRISSSTTSSPQSNLHSPSKLGSKGFKMFKNANRDAIMSSSRVMTPEKPKMVSKIFGKSAKIRRAYTPTHTSTPMAVSSLNPPSSSTSNSTTAAITSTSPPANEHYDIDNDFDSPSKNRKSSNISASSIIIYQDENHIKSNHARKSSNPIPYPPTEPLPTNISASVAETGKGSTTTKSNLSKGCPLFDDKENKASYQFVKPLQTAFNSSGLVKKNSISGSSDRKLPPETPIKRNPLMILNTNKVVPPYSSGFAEGKDVMGDQHDIYSHIPCQNQRFPGSVNPNTTTNNNNTQQHHDSDLSIEVGRNNSYDASSSTINNTSYIKIFPSSELKKEQVLQRPQEDLELVFNSDIELDDNIIPETPTKKSLLPNQHHQHHLPLYTQSKSPLLKFDTEKDGRRNLSIVLDKSNATKREISEPPSTPINMSFAKNSFKKPMNNAERGDDPDSIIAQRIDIMPSLDEADSVSVYPSKIDEHLIEKFGMKNIKYIGSGAFSIAFECLFNNEKFAIKRTKKPLIGKLEKQTIKREIEALRVLTSIKEDEATNMQEQEEGKEYLVYFIEAWDFNNYYYIMTEFCEGGTLFDFLEENKHYKIDEFRIWKILIEILNGLKFIHSKNYLHLDLKPANIFITFEGSLKIGDFGLATKLPILEKDFDLEGDRNYIAPELINDKIYTPFADIFSLGLIILEIAANIILPDNGTPWRKLRSGDLSDAGRLSSDNISMFLQHNPNTNSNISGSGSRSGSGSTGGNGSAGDGSTNSTNFSYNSLSGNSLTLNPPVKAVHGTSDTNNTLASELSKNIEGLIPSWAPDFLVHGDSMNLDKLVNKMLRPNPFDRPSACNILEMPECLIVENRRKCGATIFEGEFGSPPDE.

A compositionally biased stretch (polar residues) spans 1 to 35 (MDSNPCQDVSGDTSSTPMANNNPTNDSTISSQNHS). 8 disordered regions span residues 1-61 (MDSN…HSQQ), 188-209 (NSQI…SSSM), 288-336 (SNNQ…SKGF), 378-434 (PTHT…SSNI), 451-473 (NHAR…TNIS), 524-543 (KNSI…PIKR), 584-606 (QRFP…QHHD), and 721-754 (KREI…GDDP). The span at 37-55 (IGLRKHQQQHYHQHSHSQM) shows a compositional bias: basic residues. The span at 299–308 (VSQSPSPSSK) shows a compositional bias: polar residues. The segment covering 388-413 (SSLNPPSSSTSNSTTAAITSTSPPAN) has biased composition (low complexity). Residues 591–601 (NPNTTTNNNNT) are compositionally biased toward low complexity. The Protein kinase domain maps to 791–1154 (MKNIKYIGSG…ACNILEMPEC (364 aa)). Residues 797–805 (IGSGAFSIA) and lysine 818 contribute to the ATP site. Aspartate 929 serves as the catalytic Proton acceptor. Mg(2+) contacts are provided by asparagine 934 and aspartate 947. Positions 1034–1068 (HNPNTNSNISGSGSRSGSGSTGGNGSAGDGSTNST) are disordered. Residues 1037-1046 (NTNSNISGSG) show a composition bias toward low complexity. Over residues 1047–1061 (SRSGSGSTGGNGSAG) the composition is skewed to gly residues.

The protein belongs to the protein kinase superfamily. Ser/Thr protein kinase family. WEE1 subfamily. Phosphorylated.

It localises to the bud neck. The protein localises to the nucleus. It carries out the reaction L-seryl-[protein] + ATP = O-phospho-L-seryl-[protein] + ADP + H(+). It catalyses the reaction L-threonyl-[protein] + ATP = O-phospho-L-threonyl-[protein] + ADP + H(+). Protein kinase that acts as a negative regulator of entry into mitosis (G2 to M transition) by phosphorylating and inhibiting the mitosis-promoting cyclin B-bound CDC28 at 'Tyr-18'. SWE1-mediated inhibition of CDC28 acts in a cell size or morphogenesis checkpoint to delay mitosis in response to defects in growth, actin organization or bud formation. Plays an important role in filamentous growth. In Candida albicans (strain SC5314 / ATCC MYA-2876) (Yeast), this protein is Mitosis inhibitor protein kinase SWE1 (SWE1).